The primary structure comprises 300 residues: MEIAGKAVCVFLLLAIIKLRRSEGINRVSANLGHNTVMTCPTRTNISMVTWKINPKTGHQCTLAYRIDKDSTGKTNCSDRINWRSRPDWDQALEIQQVGKADEGNYTCEVVNADGNFHRLYHLTVIVAPRMALYCDDYGNPVCEAETEKSAAEISWVPESNSTPRADSHDNGTVTVVSWFAARSTNGKNPTCIVSHATLNETKSINCSSSYRDLILCIAIILSFLIIITFMAVIYYLKLHGCRFCHRSKPPDIIPTYSSQDDTVEVEPYTTYVQKENVIYNSVSDLTLRQNLPQGQSPAT.

Positions 1–24 are cleaved as a signal peptide; it reads MEIAGKAVCVFLLLAIIKLRRSEG. The region spanning 25 to 124 is the Ig-like V-type domain; it reads INRVSANLGH…GNFHRLYHLT (100 aa). Over 25–213 the chain is Extracellular; that stretch reads INRVSANLGH…SINCSSSYRD (189 aa). 2 disulfides stabilise this stretch: Cys40–Cys108 and Cys143–Cys192. Asn45, Asn76, Asn105, Asn171, Asn200, and Asn206 each carry an N-linked (GlcNAc...) asparagine glycan. Positions 122-206 constitute an Ig-like C2-type domain; the sequence is HLTVIVAPRM…ATLNETKSIN (85 aa). Residues 214–234 form a helical membrane-spanning segment; it reads LILCIAIILSFLIIITFMAVI. Over 235–300 the chain is Cytoplasmic; that stretch reads YYLKLHGCRF…NLPQGQSPAT (66 aa).

Belongs to the CD200R family. Post-translationally, glycosylated. In terms of processing, phosphorylated. In terms of tissue distribution, highly expressed in macrophages, peripheral blood lymphocytes (PBL) and peripheral blood mononuclear cells (PBMC). Weakly expressed in bursa, thymus, spleen, liver and brain.

It localises to the membrane. The protein localises to the secreted. The sequence is that of Cell surface glycoprotein CD200 receptor 1-A (CD200R1A) from Gallus gallus (Chicken).